The primary structure comprises 127 residues: Fluoride-specific ion channel FluC (127 aa).

Helical transmembrane passes span 4–24 (LLLA…MLSM), 35–55 (IGTL…FAWF), 71–91 (TGFC…VFLL), and 103–123 (VLIN…LFSA). Glycine 75 and threonine 78 together coordinate Na(+).

It belongs to the fluoride channel Fluc/FEX (TC 1.A.43) family.

The protein resides in the cell inner membrane. The enzyme catalyses fluoride(in) = fluoride(out). With respect to regulation, na(+) is not transported, but it plays an essential structural role and its presence is essential for fluoride channel function. In terms of biological role, fluoride-specific ion channel. Important for reducing fluoride concentration in the cell, thus reducing its toxicity. This is Fluoride-specific ion channel FluC from Salmonella agona (strain SL483).